Consider the following 921-residue polypeptide: Guanylate kinase-associated protein mars (921 aa).

Position 49 is a phosphoserine (serine 49). The residue at position 51 (threonine 51) is a Phosphothreonine. 2 positions are modified to phosphoserine: serine 76 and serine 170. Phosphotyrosine is present on tyrosine 172. Disordered stretches follow at residues 179-208 and 273-325; these read GKGK…TVAA and RPTP…PLGN. 2 stretches are compositionally biased toward low complexity: residues 193 to 208 and 273 to 285; these read KPTS…TVAA and RPTP…AKTP. Phosphoserine is present on serine 444. The tract at residues 500–531 is disordered; it reads QTTVKEDTGDSTLVPEGTKTPPRRESNGMPNY. Threonine 519 is subject to Phosphothreonine. Serine 554 bears the Phosphoserine mark. Disordered stretches follow at residues 641-660 and 743-763; these read AGAT…SKPV and TKVE…RHSS. A phosphoserine mark is found at serine 785 and serine 792. Disordered regions lie at residues 809-833 and 861-921; these read QNAA…TKRQ and ETVG…SEFM. At threonine 826 the chain carries Phosphothreonine. A compositionally biased stretch (polar residues) spans 878-907; it reads EASTESGSLEQNPGRDSNQENEATPRTYTL.

The protein belongs to the SAPAP family. In terms of tissue distribution, expressed in the central nervous system and at different stages of gametogenesis. In embryos, it is expressed in central nervous system and brain. In testis, it is strongly expressed in pre-meiotic germ cells, but is not found in somatic or post-meiotic cells.

The protein localises to the cell membrane. It localises to the nucleus. The protein resides in the nucleoplasm. It is found in the cytoplasm. Its subcellular location is the cytoskeleton. The protein localises to the spindle. Its function is as follows. Cell cycle regulator. This chain is Guanylate kinase-associated protein mars (mars), found in Drosophila melanogaster (Fruit fly).